A 379-amino-acid polypeptide reads, in one-letter code: Putative nickel insertion protein (379 aa).

The protein belongs to the LarC family.

This Methanocaldococcus jannaschii (strain ATCC 43067 / DSM 2661 / JAL-1 / JCM 10045 / NBRC 100440) (Methanococcus jannaschii) protein is Putative nickel insertion protein.